A 371-amino-acid chain; its full sequence is tRNA-specific 2-thiouridylase MnmA 2 (371 aa).

ATP-binding positions include 13–20 and Met-39; that span reads GMSGGVDS. The interaction with target base in tRNA stretch occupies residues 99–101; the sequence is NPD. Cys-104 serves as the catalytic Nucleophile. Cys-104 and Cys-200 form a disulfide bridge. Gly-128 serves as a coordination point for ATP. An interaction with tRNA region spans residues 150 to 152; it reads KDQ. Cys-200 acts as the Cysteine persulfide intermediate in catalysis. The interval 308–309 is interaction with tRNA; it reads RY.

Belongs to the MnmA/TRMU family.

The protein localises to the cytoplasm. It catalyses the reaction S-sulfanyl-L-cysteinyl-[protein] + uridine(34) in tRNA + AH2 + ATP = 2-thiouridine(34) in tRNA + L-cysteinyl-[protein] + A + AMP + diphosphate + H(+). Its function is as follows. Catalyzes the 2-thiolation of uridine at the wobble position (U34) of tRNA, leading to the formation of s(2)U34. The polypeptide is tRNA-specific 2-thiouridylase MnmA 2 (Geobacillus kaustophilus (strain HTA426)).